We begin with the raw amino-acid sequence, 198 residues long: Recombination protein RecR (198 aa).

The C4-type zinc finger occupies 58–73; it reads CSVCNNLTEKDPCDFC. Residues 81-175 form the Toprim domain; the sequence is NLICVVESPK…KVTRIAHGLP (95 aa).

The protein belongs to the RecR family.

In terms of biological role, may play a role in DNA repair. It seems to be involved in an RecBC-independent recombinational process of DNA repair. It may act with RecF and RecO. In Halothermothrix orenii (strain H 168 / OCM 544 / DSM 9562), this protein is Recombination protein RecR.